Consider the following 1207-residue polypeptide: DNA-directed RNA polymerase subunit beta' (1207 aa).

Zn(2+) contacts are provided by cysteine 60, cysteine 62, cysteine 75, and cysteine 78. Mg(2+)-binding residues include aspartate 449, aspartate 451, and aspartate 453. Zn(2+) contacts are provided by cysteine 822, cysteine 896, cysteine 903, and cysteine 906.

This sequence belongs to the RNA polymerase beta' chain family. In terms of assembly, the RNAP catalytic core consists of 2 alpha, 1 beta, 1 beta' and 1 omega subunit. When a sigma factor is associated with the core the holoenzyme is formed, which can initiate transcription. Requires Mg(2+) as cofactor. The cofactor is Zn(2+).

The enzyme catalyses RNA(n) + a ribonucleoside 5'-triphosphate = RNA(n+1) + diphosphate. In terms of biological role, DNA-dependent RNA polymerase catalyzes the transcription of DNA into RNA using the four ribonucleoside triphosphates as substrates. The protein is DNA-directed RNA polymerase subunit beta' of Staphylococcus aureus (strain NCTC 8325 / PS 47).